Consider the following 549-residue polypeptide: Elongator complex protein 3 (549 aa).

A Radical SAM core domain is found at 84 to 374 (RTASGIAVVA…YRVQRDIPMP (291 aa)). [4Fe-4S] cluster contacts are provided by cysteine 101, cysteine 111, and cysteine 114. Acetyl-CoA is bound by residues lysine 166, 476–479 (ELHV), 499–501 (FGM), and tyrosine 532. The region spanning 398–549 (TECRDVRTRE…EGPYMVKKLD (152 aa)) is the N-acetyltransferase domain.

It belongs to the ELP3 family. As to quaternary structure, component of the elongator complex. Interacts with transcriptional repressors snai1 and snai2; interaction with snai1 inhibits its ubiquitination and stabilizes it. [4Fe-4S] cluster is required as a cofactor.

Its subcellular location is the cytoplasm. It is found in the nucleus. The catalysed reaction is uridine(34) in tRNA + acetyl-CoA + S-adenosyl-L-methionine + H2O = 5-(carboxymethyl)uridine(34) in tRNA + 5'-deoxyadenosine + L-methionine + CoA + 2 H(+). Its pathway is tRNA modification; 5-methoxycarbonylmethyl-2-thiouridine-tRNA biosynthesis. Functionally, catalytic tRNA acetyltransferase subunit of the elongator complex which is required for multiple tRNA modifications, including mcm5U (5-methoxycarbonylmethyl uridine), mcm5s2U (5-methoxycarbonylmethyl-2-thiouridine), and ncm5U (5-carbamoylmethyl uridine). In the elongator complex, acts as a tRNA uridine(34) acetyltransferase by mediating formation of carboxymethyluridine in the wobble base at position 34 in tRNAs. Stabilizes transcriptional repressor snai1 by inhibiting its ubiquitination which promotes neural crest cell migration. The sequence is that of Elongator complex protein 3 from Xenopus tropicalis (Western clawed frog).